Consider the following 218-residue polypeptide: Uracil-DNA glycosylase (218 aa).

D68 serves as the catalytic Proton acceptor.

The protein belongs to the uracil-DNA glycosylase (UDG) superfamily. UNG family. As to quaternary structure, homodimer. Interacts with protein OPG148. Component of the Uracil-DNA glycosylase(UDG)-OPG148-polymerase complex; OPG148 and UDG form a heterodimeric processivity factor that associates with OPG71 to form the processive polymerase holoenzyme.

It carries out the reaction Hydrolyzes single-stranded DNA or mismatched double-stranded DNA and polynucleotides, releasing free uracil.. Plays an essential role in viral replication as a component of the DNA polymerase processivity factor. Excises uracil residues from the DNA which can arise as a result of misincorporation of dUMP residues by DNA polymerase or due to deamination of cytosine. The polypeptide is Uracil-DNA glycosylase (OPG116) (Vaccinia virus (strain Ankara) (VACV)).